We begin with the raw amino-acid sequence, 215 residues long: Adenylate kinase (215 aa).

Residue 10–15 participates in ATP binding; the sequence is GAGKGT. An NMP region spans residues 30-59; that stretch reads STGDILRENVKNQTELGKKAKEYMDKGLLV. AMP contacts are provided by residues T31, R36, 57 to 59, 85 to 88, and Q92; these read LLV and GFPR. The interval 126–163 is LID; that stretch reads GRRICKSCGASFHVVYRPPKKEGICDICGGQLYQREDD. Position 127 (R127) interacts with ATP. Zn(2+) is bound by residues C130 and C133. Residue 136–137 coordinates ATP; it reads SF. 2 residues coordinate Zn(2+): C150 and C153. 2 residues coordinate AMP: R160 and R171. E199 provides a ligand contact to ATP.

The protein belongs to the adenylate kinase family. As to quaternary structure, monomer.

Its subcellular location is the cytoplasm. It carries out the reaction AMP + ATP = 2 ADP. Its pathway is purine metabolism; AMP biosynthesis via salvage pathway; AMP from ADP: step 1/1. Functionally, catalyzes the reversible transfer of the terminal phosphate group between ATP and AMP. Plays an important role in cellular energy homeostasis and in adenine nucleotide metabolism. The polypeptide is Adenylate kinase (Caldicellulosiruptor saccharolyticus (strain ATCC 43494 / DSM 8903 / Tp8T 6331)).